Reading from the N-terminus, the 89-residue chain is Small ribosomal subunit protein uS15 (89 aa).

Belongs to the universal ribosomal protein uS15 family. In terms of assembly, part of the 30S ribosomal subunit. Forms a bridge to the 50S subunit in the 70S ribosome, contacting the 23S rRNA.

In terms of biological role, one of the primary rRNA binding proteins, it binds directly to 16S rRNA where it helps nucleate assembly of the platform of the 30S subunit by binding and bridging several RNA helices of the 16S rRNA. Functionally, forms an intersubunit bridge (bridge B4) with the 23S rRNA of the 50S subunit in the ribosome. This is Small ribosomal subunit protein uS15 from Orientia tsutsugamushi (strain Ikeda) (Rickettsia tsutsugamushi).